Reading from the N-terminus, the 185-residue chain is Cuticle protein 18.6, isoform A (185 aa).

Repeat copies occupy residues 21–24 (AAPA), 33–36 (AAPV), 41–44 (AAPV), 54–57 (AAPA), 133–136 (AAPV), 139–142 (AAPV), and 150–153 (AAPV). The Chitin-binding type R&amp;R domain maps to 64 to 134 (HPQYSFAYNV…KEAGAHPAAA (71 aa)).

Its function is as follows. Component of the cuticle of migratory locust which contains more than 100 different structural proteins. In Locusta migratoria (Migratory locust), this protein is Cuticle protein 18.6, isoform A.